Consider the following 281-residue polypeptide: Bifunctional protein FolD (281 aa).

NADP(+) is bound by residues 164-166 (GRS), serine 189, and threonine 230.

Belongs to the tetrahydrofolate dehydrogenase/cyclohydrolase family. Homodimer.

The catalysed reaction is (6R)-5,10-methylene-5,6,7,8-tetrahydrofolate + NADP(+) = (6R)-5,10-methenyltetrahydrofolate + NADPH. It catalyses the reaction (6R)-5,10-methenyltetrahydrofolate + H2O = (6R)-10-formyltetrahydrofolate + H(+). It functions in the pathway one-carbon metabolism; tetrahydrofolate interconversion. In terms of biological role, catalyzes the oxidation of 5,10-methylenetetrahydrofolate to 5,10-methenyltetrahydrofolate and then the hydrolysis of 5,10-methenyltetrahydrofolate to 10-formyltetrahydrofolate. In Dictyoglomus turgidum (strain DSM 6724 / Z-1310), this protein is Bifunctional protein FolD.